A 298-amino-acid polypeptide reads, in one-letter code: Max-like protein X (298 aa).

Residues 1–63 (MTEPGASPED…PRGCREDSSH (63 aa)) are disordered. At Ser7 the chain carries Phosphoserine. Residues 28 to 37 (GRARARRGAG) are compositionally biased toward basic residues. A phosphoserine mark is found at Ser45, Ser48, Ser74, Ser77, and Ser98. The disordered stretch occupies residues 91–145 (SVVSRANSIGSTSASSVPNTDDEDSDYHQEAYKESYKDRRRRAHTQAEQKRRDAI). The span at 94-109 (SRANSIGSTSASSVPN) shows a compositional bias: polar residues. Composition is skewed to basic and acidic residues over residues 116–127 (DYHQEAYKESYK) and 135–145 (TQAEQKRRDAI). The bHLH domain maps to 129-187 (RRRRAHTQAEQKRRDAIKRGYDDLQTIVPTCQQQDFSIGSQKLSKAIVLQKTIDYIQFL). The tract at residues 140–160 (KRRDAIKRGYDDLQTIVPTCQ) is leucine-zipper.

As to quaternary structure, efficient DNA binding requires dimerization with another bHLH protein. Binds DNA as a heterodimer with MAD1, MAD4, MNT, WBSCR14 and MLXIP. Can also bind DNA as a homodimer. Expressed in all tissues tested, including spleen, thymus, prostate, ovary, intestine, colon, peripheral blood leukocyte, heart, liver, skeletal muscle and kidney. Lower levels of expression in testis, brain, placenta and lung.

The protein resides in the cytoplasm. The protein localises to the nucleus. Its function is as follows. Transcription regulator. Forms a sequence-specific DNA-binding protein complex with MAD1, MAD4, MNT, WBSCR14 and MLXIP which recognizes the core sequence 5'-CACGTG-3'. The TCFL4-MAD1, TCFL4-MAD4, TCFL4-WBSCR14 complexes are transcriptional repressors. Plays a role in transcriptional activation of glycolytic target genes. Involved in glucose-responsive gene regulation. The protein is Max-like protein X (MLX) of Homo sapiens (Human).